A 230-amino-acid polypeptide reads, in one-letter code: Ribose-5-phosphate isomerase A (230 aa).

Substrate-binding positions include 29–32 (SGST), 86–89 (DGAD), and 99–102 (KGGG). Glutamate 108 functions as the Proton acceptor in the catalytic mechanism. Lysine 126 serves as a coordination point for substrate.

The protein belongs to the ribose 5-phosphate isomerase family. In terms of assembly, homodimer.

It carries out the reaction aldehydo-D-ribose 5-phosphate = D-ribulose 5-phosphate. It functions in the pathway carbohydrate degradation; pentose phosphate pathway; D-ribose 5-phosphate from D-ribulose 5-phosphate (non-oxidative stage): step 1/1. In terms of biological role, catalyzes the reversible conversion of ribose-5-phosphate to ribulose 5-phosphate. The sequence is that of Ribose-5-phosphate isomerase A from Desulfatibacillum aliphaticivorans.